A 322-amino-acid polypeptide reads, in one-letter code: MSSDQAKDRAKAAIVGSLVADAATQPVHWVYDHNRFYENFRNKSEPEFNSEWLNPYYRYDNGTFSIYGEQNYVLLKHLVENKGFNLKKYMDAYYRHFGPGTNYDQPQSRDRLPKQGPWRNEHITRALNKIQSGDQRSGTDVAECDSYAMITPLVAMYAGSGQLDSYVEQVVRVTLNNDRSVRTAQFFAKLLEHYILHGRDPEAFRKVLNNFPDDQYKFEWQKAYYDRDLSNNDAVRKYGSGCGLPGNFQGALHCVNRNEDYVSSVRTTIRSGGCNCPRACGVGAWVAAQYGSQCIPSNWISRTSRGNEIVQYAEQLSKMMKK.

This sequence belongs to the ADP-ribosylglycohydrolase family. J1 crystallin subfamily. Expressed in the rhopalia. Present in both the large and small eyes.

The chain is Crystallin J1A from Tripedalia cystophora (Jellyfish).